Consider the following 361-residue polypeptide: RuBisCO accumulation factor 1 (361 aa).

The tract at residues 16 to 197 is N-terminal alpha-helix; sequence NELAQELLRK…RKQIEQLLVD (182 aa). Residues 221–347 are C-terminal beta-sheet; the sequence is PRIVPVVGQL…VIILVRPRRI (127 aa).

This sequence belongs to the RAF family. In terms of assembly, homodimer. Forms an RbcL(8)-Raf1(8) complex. Each Raf1 dimer clamps the exterior of an RbcL dimer, protecting it. The extreme C-terminus (residues 354-361) inserts into the catalytic pocket of RbcL where the Glu-361 forms a salt bridge with 'Lys-202'. This insertion probably contributes to the assembly of RbcL(8). Forms complexes of many stoichiometries with RbcL with and without RbcS. RbcX and Raf1 can bind simultaneously to RbcL.

Its subcellular location is the cytoplasm. A major RuBisCO chaperone. Acts after GroEL-GroES chaperonin to fold and/or assemble the large subunit of RuBisCO (ccbL, rbcL). Cooperates with RbcX in RbcL folding, plays the major role in assembly of dimers into RbcL(8)-Raf1(8) intermediate complexes. RbcS replaces Raf1, leading to holoenzyme formation. Its function is as follows. In vitro acts as an antagonist to CcmM35, suggesting it might regulate RuBisCO condensation and decondensation. The sequence is that of RuBisCO accumulation factor 1 from Nostoc sp. (strain PCC 7120 / SAG 25.82 / UTEX 2576).